The sequence spans 461 residues: tRNA modification GTPase MnmE (461 aa).

Positions 20, 85, and 124 each coordinate (6S)-5-formyl-5,6,7,8-tetrahydrofolate. The region spanning 221–383 is the TrmE-type G domain; sequence GIPVAIIGET…LQQLLTEVSS (163 aa). Asn-231 contacts K(+). GTP is bound by residues 231-236, 250-256, and 275-278; these read NAGKST, SDIHGTT, and DTAG. Ser-235 provides a ligand contact to Mg(2+). K(+)-binding residues include Ser-250, Ile-252, and Thr-255. Thr-256 serves as a coordination point for Mg(2+). Position 461 (Lys-461) interacts with (6S)-5-formyl-5,6,7,8-tetrahydrofolate.

Belongs to the TRAFAC class TrmE-Era-EngA-EngB-Septin-like GTPase superfamily. TrmE GTPase family. Homodimer. Heterotetramer of two MnmE and two MnmG subunits. Requires K(+) as cofactor.

The protein localises to the cytoplasm. Exhibits a very high intrinsic GTPase hydrolysis rate. Involved in the addition of a carboxymethylaminomethyl (cmnm) group at the wobble position (U34) of certain tRNAs, forming tRNA-cmnm(5)s(2)U34. This is tRNA modification GTPase MnmE from Parabacteroides distasonis (strain ATCC 8503 / DSM 20701 / CIP 104284 / JCM 5825 / NCTC 11152).